The chain runs to 394 residues: Mannosyl-3-phosphoglycerate synthase (394 aa).

The protein belongs to the glycosyltransferase 2 family.

It is found in the cytoplasm. The enzyme catalyses (2R)-3-phosphoglycerate + GDP-alpha-D-mannose = 2-O-(alpha-D-mannosyl)-3-phosphoglycerate + GDP + H(+). The protein operates within carbohydrate biosynthesis; 2-(alpha-D-mannosyl)-D-glycerate biosynthesis; 2-(alpha-D-mannosyl)-D-glycerate from GDP-alpha-D-mannose (MPG route): step 1/2. Functionally, transfers a mannosyl group from GDP-mannose to phosphoglycerate to form mannosyl-3-phosphoglycerate (MPG). The chain is Mannosyl-3-phosphoglycerate synthase (mngA) from Pyrococcus abyssi (strain GE5 / Orsay).